The following is a 393-amino-acid chain: NAD(P)H-quinone oxidoreductase subunit H, chloroplastic (393 aa).

Belongs to the complex I 49 kDa subunit family. NDH is composed of at least 16 different subunits, 5 of which are encoded in the nucleus.

Its subcellular location is the plastid. The protein resides in the chloroplast thylakoid membrane. The enzyme catalyses a plastoquinone + NADH + (n+1) H(+)(in) = a plastoquinol + NAD(+) + n H(+)(out). It catalyses the reaction a plastoquinone + NADPH + (n+1) H(+)(in) = a plastoquinol + NADP(+) + n H(+)(out). NDH shuttles electrons from NAD(P)H:plastoquinone, via FMN and iron-sulfur (Fe-S) centers, to quinones in the photosynthetic chain and possibly in a chloroplast respiratory chain. The immediate electron acceptor for the enzyme in this species is believed to be plastoquinone. Couples the redox reaction to proton translocation, and thus conserves the redox energy in a proton gradient. The sequence is that of NAD(P)H-quinone oxidoreductase subunit H, chloroplastic from Drimys granadensis.